A 95-amino-acid polypeptide reads, in one-letter code: Large ribosomal subunit protein uL23 (95 aa).

Belongs to the universal ribosomal protein uL23 family. Part of the 50S ribosomal subunit. Contacts protein L29, and trigger factor when it is bound to the ribosome.

Functionally, one of the early assembly proteins it binds 23S rRNA. One of the proteins that surrounds the polypeptide exit tunnel on the outside of the ribosome. Forms the main docking site for trigger factor binding to the ribosome. The sequence is that of Large ribosomal subunit protein uL23 from Fusobacterium nucleatum subsp. nucleatum (strain ATCC 25586 / DSM 15643 / BCRC 10681 / CIP 101130 / JCM 8532 / KCTC 2640 / LMG 13131 / VPI 4355).